A 284-amino-acid chain; its full sequence is 4-hydroxybenzoate octaprenyltransferase (284 aa).

8 helical membrane-spanning segments follow: residues 18–38, 42–62, 93–113, 136–156, 161–181, 209–229, 233–253, and 264–284; these read PIGT…AAEG, WHVL…GCVI, IILF…MNPL, HLPQ…AWAA, LPWV…AYDT, LIIG…GLHY, QSFY…QHLI, and AFLN…VAFW.

It belongs to the UbiA prenyltransferase family. Mg(2+) serves as cofactor.

The protein resides in the cell inner membrane. The catalysed reaction is all-trans-octaprenyl diphosphate + 4-hydroxybenzoate = 4-hydroxy-3-(all-trans-octaprenyl)benzoate + diphosphate. Its pathway is cofactor biosynthesis; ubiquinone biosynthesis. Functionally, catalyzes the prenylation of para-hydroxybenzoate (PHB) with an all-trans polyprenyl group. Mediates the second step in the final reaction sequence of ubiquinone-8 (UQ-8) biosynthesis, which is the condensation of the polyisoprenoid side chain with PHB, generating the first membrane-bound Q intermediate 3-octaprenyl-4-hydroxybenzoate. This Vibrio vulnificus (strain CMCP6) protein is 4-hydroxybenzoate octaprenyltransferase.